The chain runs to 253 residues: MTDTIANIKLQLKNTSPNDEQLLIWQQDKRVGVQNALKAWQKKQVMLREKREHFLSRFDIERQYWMQGYDLIAGVDEVGRGPLAGPVVAAAVILPHDFDVLDVIDSKQLSAKKRDELYDKIIEKAISIGVGRVEASIIDEINIYEAARVAMTEAVNQLAPIPEALLIDAMRLDLDLPQEFLIKGDARSNSIGAASIIAKVTRDRLMASYGLKYPGYGFEKNAGYGTKEHLEGIKKIGITPIHRKTFAPIKDIL.

The RNase H type-2 domain maps to 70–253 (DLIAGVDEVG…KTFAPIKDIL (184 aa)). A divalent metal cation-binding residues include D76, E77, and D168.

The protein belongs to the RNase HII family. Mn(2+) is required as a cofactor. It depends on Mg(2+) as a cofactor.

The protein localises to the cytoplasm. It catalyses the reaction Endonucleolytic cleavage to 5'-phosphomonoester.. Functionally, endonuclease that specifically degrades the RNA of RNA-DNA hybrids. The protein is Ribonuclease HII of Leuconostoc mesenteroides subsp. mesenteroides (strain ATCC 8293 / DSM 20343 / BCRC 11652 / CCM 1803 / JCM 6124 / NCDO 523 / NBRC 100496 / NCIMB 8023 / NCTC 12954 / NRRL B-1118 / 37Y).